A 254-amino-acid polypeptide reads, in one-letter code: 3-deoxy-manno-octulosonate cytidylyltransferase (254 aa).

It belongs to the KdsB family.

Its subcellular location is the cytoplasm. The catalysed reaction is 3-deoxy-alpha-D-manno-oct-2-ulosonate + CTP = CMP-3-deoxy-beta-D-manno-octulosonate + diphosphate. It functions in the pathway nucleotide-sugar biosynthesis; CMP-3-deoxy-D-manno-octulosonate biosynthesis; CMP-3-deoxy-D-manno-octulosonate from 3-deoxy-D-manno-octulosonate and CTP: step 1/1. Its pathway is bacterial outer membrane biogenesis; lipopolysaccharide biosynthesis. In terms of biological role, activates KDO (a required 8-carbon sugar) for incorporation into bacterial lipopolysaccharide in Gram-negative bacteria. This Chlamydia felis (strain Fe/C-56) (Chlamydophila felis) protein is 3-deoxy-manno-octulosonate cytidylyltransferase.